The sequence spans 325 residues: Ribose-phosphate pyrophosphokinase 2 (325 aa).

96-101 lines the ATP pocket; sequence RQDKKD. Positions 135, 137, 146, and 150 each coordinate Mg(2+). An ATP-binding site is contributed by His137. The interval 219 to 234 is binding of phosphoribosylpyrophosphate; that stretch reads KDRVAILVDDMADTCG.

Belongs to the ribose-phosphate pyrophosphokinase family. Homodimer. The active form is probably a hexamer composed of 3 homodimers. Requires Mg(2+) as cofactor.

It catalyses the reaction D-ribose 5-phosphate + ATP = 5-phospho-alpha-D-ribose 1-diphosphate + AMP + H(+). Its pathway is metabolic intermediate biosynthesis; 5-phospho-alpha-D-ribose 1-diphosphate biosynthesis; 5-phospho-alpha-D-ribose 1-diphosphate from D-ribose 5-phosphate (route I): step 1/1. Activated by magnesium and inorganic phosphate. Competitively or non-competitively inhibited by ADP, 2,3-bisphosphoglyceride or GDP. Functionally, catalyzes the synthesis of phosphoribosylpyrophosphate (PRPP) that is essential for nucleotide synthesis. This is Ribose-phosphate pyrophosphokinase 2 (PRPS2) from Gallus gallus (Chicken).